The sequence spans 443 residues: Trigger factor (443 aa).

One can recognise a PPIase FKBP-type domain in the interval 163–248 (GDTAVIDFEG…INEIKAKELP (86 aa)).

Belongs to the FKBP-type PPIase family. Tig subfamily.

The protein localises to the cytoplasm. The enzyme catalyses [protein]-peptidylproline (omega=180) = [protein]-peptidylproline (omega=0). In terms of biological role, involved in protein export. Acts as a chaperone by maintaining the newly synthesized protein in an open conformation. Functions as a peptidyl-prolyl cis-trans isomerase. The chain is Trigger factor from Agathobacter rectalis (strain ATCC 33656 / DSM 3377 / JCM 17463 / KCTC 5835 / VPI 0990) (Eubacterium rectale).